The sequence spans 334 residues: Magnesium-chelatase subunit ChlI (334 aa).

43–50 (GDRGTGKS) contributes to the ATP binding site.

It belongs to the Mg-chelatase subunits D/I family.

It localises to the plastid. The protein localises to the chloroplast. It carries out the reaction protoporphyrin IX + Mg(2+) + ATP + H2O = Mg-protoporphyrin IX + ADP + phosphate + 3 H(+). The protein operates within porphyrin-containing compound metabolism; chlorophyll biosynthesis. Involved in chlorophyll biosynthesis; introduces a magnesium ion into protoporphyrin IX to yield Mg-protoporphyrin IX. This chain is Magnesium-chelatase subunit ChlI (chlI), found in Olisthodiscus luteus (Marine phytoflagellate).